The chain runs to 29 residues: Sarcolamban B (29 aa).

Residues 7 to 27 (LFTTFLILAFLLFLLYAFYEA) form a helical membrane-spanning segment.

As to quaternary structure, interacts with SERCA. As to expression, strongly expressed in embryonic and larval somatic muscles and postembryonic heart.

The protein resides in the sarcoplasmic reticulum membrane. Plays an essential role in the regulation of calcium transport at the sarcoplasmic reticulum (SR), which is secondarily required for regular muscle contraction. In Drosophila melanogaster (Fruit fly), this protein is Sarcolamban B.